The chain runs to 271 residues: NADPH-dependent 7-cyano-7-deazaguanine reductase (271 aa).

Substrate is bound at residue 81–83 (IES). 83–84 (SK) provides a ligand contact to NADPH. The active-site Thioimide intermediate is the Cys177. Asp184 serves as the catalytic Proton donor. 216-217 (HE) serves as a coordination point for substrate. 245–246 (RG) is an NADPH binding site.

Belongs to the GTP cyclohydrolase I family. QueF type 2 subfamily. Homodimer.

It is found in the cytoplasm. It carries out the reaction 7-aminomethyl-7-carbaguanine + 2 NADP(+) = 7-cyano-7-deazaguanine + 2 NADPH + 3 H(+). It functions in the pathway tRNA modification; tRNA-queuosine biosynthesis. In terms of biological role, catalyzes the NADPH-dependent reduction of 7-cyano-7-deazaguanine (preQ0) to 7-aminomethyl-7-deazaguanine (preQ1). In Xanthomonas campestris pv. campestris (strain B100), this protein is NADPH-dependent 7-cyano-7-deazaguanine reductase.